Here is a 374-residue protein sequence, read N- to C-terminus: tRNA-specific 2-thiouridylase MnmA (374 aa).

Residues 12-19 and Met-38 each bind ATP; that span reads GMSGGVDS. Residues 98–100 are interaction with target base in tRNA; that stretch reads NPD. The active-site Nucleophile is Cys-103. Cys-103 and Cys-202 form a disulfide bridge. Residue Gly-128 participates in ATP binding. Positions 152–154 are interaction with tRNA; the sequence is KDQ. Cys-202 (cysteine persulfide intermediate) is an active-site residue. The tract at residues 316-317 is interaction with tRNA; sequence RY.

This sequence belongs to the MnmA/TRMU family.

It localises to the cytoplasm. It catalyses the reaction S-sulfanyl-L-cysteinyl-[protein] + uridine(34) in tRNA + AH2 + ATP = 2-thiouridine(34) in tRNA + L-cysteinyl-[protein] + A + AMP + diphosphate + H(+). Catalyzes the 2-thiolation of uridine at the wobble position (U34) of tRNA, leading to the formation of s(2)U34. This Vibrio vulnificus (strain YJ016) protein is tRNA-specific 2-thiouridylase MnmA.